The primary structure comprises 276 residues: Dermonecrotic toxin LsaSicTox-alphaIB2iii (276 aa).

Residue His5 is part of the active site. Positions 25 and 27 each coordinate Mg(2+). Catalysis depends on His41, which acts as the Nucleophile. Intrachain disulfides connect Cys45-Cys51 and Cys47-Cys190. A Mg(2+)-binding site is contributed by Asp85. N-linked (GlcNAc...) asparagine glycosylation is found at Asn129 and Asn253.

It belongs to the arthropod phospholipase D family. Class II subfamily. It depends on Mg(2+) as a cofactor. As to expression, expressed by the venom gland.

The protein resides in the secreted. The catalysed reaction is an N-(acyl)-sphingosylphosphocholine = an N-(acyl)-sphingosyl-1,3-cyclic phosphate + choline. It catalyses the reaction an N-(acyl)-sphingosylphosphoethanolamine = an N-(acyl)-sphingosyl-1,3-cyclic phosphate + ethanolamine. It carries out the reaction a 1-acyl-sn-glycero-3-phosphocholine = a 1-acyl-sn-glycero-2,3-cyclic phosphate + choline. The enzyme catalyses a 1-acyl-sn-glycero-3-phosphoethanolamine = a 1-acyl-sn-glycero-2,3-cyclic phosphate + ethanolamine. Dermonecrotic toxins cleave the phosphodiester linkage between the phosphate and headgroup of certain phospholipids (sphingolipid and lysolipid substrates), forming an alcohol (often choline) and a cyclic phosphate. This toxin acts on sphingomyelin (SM). It may also act on ceramide phosphoethanolamine (CPE), lysophosphatidylcholine (LPC) and lysophosphatidylethanolamine (LPE), but not on lysophosphatidylserine (LPS), and lysophosphatidylglycerol (LPG). It acts by transphosphatidylation, releasing exclusively cyclic phosphate products as second products. Induces dermonecrosis, hemolysis, increased vascular permeability, edema, inflammatory response, and platelet aggregation. This chain is Dermonecrotic toxin LsaSicTox-alphaIB2iii, found in Loxosceles sabina (Tucson recluse spider).